Here is a 404-residue protein sequence, read N- to C-terminus: Alanine racemase (404 aa).

The active-site Proton acceptor; specific for D-alanine is Lys34. N6-(pyridoxal phosphate)lysine is present on Lys34. Residue Arg133 participates in substrate binding. Residues 226–273 enclose the RPE1 insert domain; that stretch reads EVSSNLSYTEEFESNTAALTTTACINKCPDVSVRLTPKLPLKGSYTVR. Tyr298 acts as the Proton acceptor; specific for L-alanine in catalysis. Met346 contacts substrate.

It belongs to the alanine racemase family. It depends on pyridoxal 5'-phosphate as a cofactor.

The catalysed reaction is L-alanine = D-alanine. It participates in amino-acid biosynthesis; D-alanine biosynthesis; D-alanine from L-alanine: step 1/1. Catalyzes the interconversion of L-alanine and D-alanine. May also act on other amino acids. This chain is Alanine racemase (alr), found in Rickettsia prowazekii (strain Madrid E).